We begin with the raw amino-acid sequence, 337 residues long: Putative tRNA (cytidine(32)/guanosine(34)-2'-O)-methyltransferase (337 aa).

5 residues coordinate S-adenosyl-L-methionine: G53, W55, D76, D92, and D117. Catalysis depends on K157, which acts as the Proton acceptor. Basic and acidic residues-rich tracts occupy residues 304–318 and 327–337; these read LKAE…KKTP and ELEKAAEKFQL. A disordered region spans residues 304-337; the sequence is LKAELSRGKDQKKTPAENVPSVEELEKAAEKFQL.

It belongs to the class I-like SAM-binding methyltransferase superfamily. RNA methyltransferase RlmE family. TRM7 subfamily.

The protein resides in the cytoplasm. The enzyme catalyses cytidine(32)/guanosine(34) in tRNA + 2 S-adenosyl-L-methionine = 2'-O-methylcytidine(32)/2'-O-methylguanosine(34) in tRNA + 2 S-adenosyl-L-homocysteine + 2 H(+). Methylates the 2'-O-ribose of nucleotides at positions 32 and 34 of the tRNA anticodon loop of substrate tRNAs. The sequence is that of Putative tRNA (cytidine(32)/guanosine(34)-2'-O)-methyltransferase from Caenorhabditis elegans.